Reading from the N-terminus, the 262-residue chain is Acyl-[acyl-carrier-protein]--UDP-N-acetylglucosamine O-acyltransferase (262 aa).

The protein belongs to the transferase hexapeptide repeat family. LpxA subfamily. As to quaternary structure, homotrimer.

It localises to the cytoplasm. The enzyme catalyses a (3R)-hydroxyacyl-[ACP] + UDP-N-acetyl-alpha-D-glucosamine = a UDP-3-O-[(3R)-3-hydroxyacyl]-N-acetyl-alpha-D-glucosamine + holo-[ACP]. It participates in glycolipid biosynthesis; lipid IV(A) biosynthesis; lipid IV(A) from (3R)-3-hydroxytetradecanoyl-[acyl-carrier-protein] and UDP-N-acetyl-alpha-D-glucosamine: step 1/6. Involved in the biosynthesis of lipid A, a phosphorylated glycolipid that anchors the lipopolysaccharide to the outer membrane of the cell. The polypeptide is Acyl-[acyl-carrier-protein]--UDP-N-acetylglucosamine O-acyltransferase (Escherichia coli O157:H7).